The following is a 138-amino-acid chain: Basic phospholipase A2 Pla2Vb (138 aa).

The first 16 residues, 1-16, serve as a signal peptide directing secretion; that stretch reads MRTLWIVAVWLMGVEG. Cystine bridges form between cysteine 42-cysteine 131, cysteine 44-cysteine 60, cysteine 59-cysteine 111, cysteine 65-cysteine 138, cysteine 66-cysteine 104, cysteine 73-cysteine 97, and cysteine 91-cysteine 102. Positions 43, 45, and 47 each coordinate Ca(2+). Histidine 63 is an active-site residue. Aspartate 64 contributes to the Ca(2+) binding site. Residue aspartate 105 is part of the active site.

The protein belongs to the phospholipase A2 family. Group II subfamily. D49 sub-subfamily. Requires Ca(2+) as cofactor. Expressed by the venom gland.

Its subcellular location is the secreted. It carries out the reaction a 1,2-diacyl-sn-glycero-3-phosphocholine + H2O = a 1-acyl-sn-glycero-3-phosphocholine + a fatty acid + H(+). In terms of biological role, snake venom phospholipase A2 (PLA2) that exhibits medium anticoagulant effects by binding to factor Xa (F10) and inhibiting the prothrombinase activity (IC(50) is 90 nM). PLA2 catalyzes the calcium-dependent hydrolysis of the 2-acyl groups in 3-sn-phosphoglycerides. In Vipera berus berus (Common viper), this protein is Basic phospholipase A2 Pla2Vb.